We begin with the raw amino-acid sequence, 636 residues long: 1-deoxy-D-xylulose-5-phosphate synthase (636 aa).

Thiamine diphosphate contacts are provided by residues His72 and 113-115 (GHA). Asp144 contacts Mg(2+). Thiamine diphosphate contacts are provided by residues 145-146 (GA), Asn174, Tyr287, and Glu370. Asn174 lines the Mg(2+) pocket.

It belongs to the transketolase family. DXPS subfamily. In terms of assembly, homodimer. The cofactor is Mg(2+). Thiamine diphosphate is required as a cofactor.

The catalysed reaction is D-glyceraldehyde 3-phosphate + pyruvate + H(+) = 1-deoxy-D-xylulose 5-phosphate + CO2. Its pathway is metabolic intermediate biosynthesis; 1-deoxy-D-xylulose 5-phosphate biosynthesis; 1-deoxy-D-xylulose 5-phosphate from D-glyceraldehyde 3-phosphate and pyruvate: step 1/1. Catalyzes the acyloin condensation reaction between C atoms 2 and 3 of pyruvate and glyceraldehyde 3-phosphate to yield 1-deoxy-D-xylulose-5-phosphate (DXP). This Rippkaea orientalis (strain PCC 8801 / RF-1) (Cyanothece sp. (strain PCC 8801)) protein is 1-deoxy-D-xylulose-5-phosphate synthase.